The following is a 132-amino-acid chain: Auxin-responsive protein SAUR72 (132 aa).

The segment at 22-54 is disordered; that stretch reads SDSQRPSRRSESFLRSSVTRRSKKQTSSVPEGH. Over residues 23–33 the composition is skewed to basic and acidic residues; sequence DSQRPSRRSES.

This sequence belongs to the ARG7 family. As to quaternary structure, interacts with and inhibits PP2C-D subfamily of type 2C phosphatases such as PP2C67/PP2C-D1. As to expression, highly expressed in the steles of roots and hypocotyls.

It is found in the cytoplasm. Provide a mechanistic link between auxin and plasma membrane H(+)-ATPases (PM H(+)-ATPases, e.g. AHA1 and AHA2), and triggers PM H(+)-ATPases activity by promoting phosphorylation of their C-terminal autoinhibitory domain as a result of PP2C-D subfamily of type 2C phosphatases inhibition, thus leading to the acidification of the apoplast and the facilitation of solutes and water uptake to drive cell expansion. Plays a role in the regulation of cell expansion, root meristem patterning and auxin transport. This is Auxin-responsive protein SAUR72 from Arabidopsis thaliana (Mouse-ear cress).